Reading from the N-terminus, the 690-residue chain is Protein-glucosylgalactosylhydroxylysine glucosidase (690 aa).

299 to 300 (WD) is a binding site for substrate. Glu429 functions as the Proton donor in the catalytic mechanism. 497–498 (KQ) contributes to the substrate binding site.

This sequence belongs to the glycosyl hydrolase 65 family.

The enzyme catalyses (5R)-5-O-[alpha-D-glucosyl-(1-&gt;2)-beta-D-galactosyl]-5-hydroxy-L-lysyl-[collagen] + H2O = (5R)-5-O-(beta-D-galactosyl)-5-hydroxy-L-lysyl-[collagen] + D-glucose. Catalyzes the hydrolysis of glucose from the disaccharide unit linked to hydroxylysine residues of collagen and collagen-like proteins. This Mus musculus (Mouse) protein is Protein-glucosylgalactosylhydroxylysine glucosidase.